A 483-amino-acid polypeptide reads, in one-letter code: Glutamate--tRNA ligase (483 aa).

A 'HIGH' region motif is present at residues 9–19; that stretch reads PSPTGNLHIGT. A 'KMSKS' region motif is present at residues 250-254; sequence KLSKR. Lys-253 serves as a coordination point for ATP.

Belongs to the class-I aminoacyl-tRNA synthetase family. Glutamate--tRNA ligase type 1 subfamily. As to quaternary structure, monomer.

It localises to the cytoplasm. It carries out the reaction tRNA(Glu) + L-glutamate + ATP = L-glutamyl-tRNA(Glu) + AMP + diphosphate. In terms of biological role, catalyzes the attachment of glutamate to tRNA(Glu) in a two-step reaction: glutamate is first activated by ATP to form Glu-AMP and then transferred to the acceptor end of tRNA(Glu). This is Glutamate--tRNA ligase from Synechocystis sp. (strain ATCC 27184 / PCC 6803 / Kazusa).